The following is a 938-amino-acid chain: Isoleucine--tRNA ligase (938 aa).

Positions 58 to 68 (PYANGNIHIGH) match the 'HIGH' region motif. Glu562 is an L-isoleucyl-5'-AMP binding site. The 'KMSKS' region motif lies at 603-607 (KMSKS). An ATP-binding site is contributed by Lys606. 4 residues coordinate Zn(2+): Cys901, Cys904, Cys921, and Cys924.

It belongs to the class-I aminoacyl-tRNA synthetase family. IleS type 1 subfamily. As to quaternary structure, monomer. Zn(2+) is required as a cofactor.

The protein localises to the cytoplasm. The enzyme catalyses tRNA(Ile) + L-isoleucine + ATP = L-isoleucyl-tRNA(Ile) + AMP + diphosphate. In terms of biological role, catalyzes the attachment of isoleucine to tRNA(Ile). As IleRS can inadvertently accommodate and process structurally similar amino acids such as valine, to avoid such errors it has two additional distinct tRNA(Ile)-dependent editing activities. One activity is designated as 'pretransfer' editing and involves the hydrolysis of activated Val-AMP. The other activity is designated 'posttransfer' editing and involves deacylation of mischarged Val-tRNA(Ile). This Actinobacillus pleuropneumoniae serotype 7 (strain AP76) protein is Isoleucine--tRNA ligase.